We begin with the raw amino-acid sequence, 244 residues long: Orotidine 5'-phosphate decarboxylase (244 aa).

Substrate is bound by residues D20, K42, 70–79, T125, R186, Q195, G215, and R216; that span reads DLKFFDIPAT. K72 acts as the Proton donor in catalysis.

Belongs to the OMP decarboxylase family. Type 1 subfamily. Homodimer.

It carries out the reaction orotidine 5'-phosphate + H(+) = UMP + CO2. It participates in pyrimidine metabolism; UMP biosynthesis via de novo pathway; UMP from orotate: step 2/2. In terms of biological role, catalyzes the decarboxylation of orotidine 5'-monophosphate (OMP) to uridine 5'-monophosphate (UMP). The protein is Orotidine 5'-phosphate decarboxylase of Xylella fastidiosa (strain M23).